We begin with the raw amino-acid sequence, 271 residues long: Sulfur carrier protein adenylyltransferase (271 aa).

ATP contacts are provided by residues Arg13, Gly40, Glu61, Arg72, Lys85, Leu109, and 129–133 (DNFPT). 2 residues coordinate Zn(2+): Cys175 and Cys178. A Glycyl cysteine thioester (Cys-Gly) (interchain with G-Cter in TtuB) cross-link involves residue Cys192. Zn(2+)-binding residues include Cys249 and Cys252.

It belongs to the HesA/MoeB/ThiF family. Zn(2+) serves as cofactor. Post-translationally, conjugated to TtuB via a covalent linkage that likely involves a lysine residue. Is able to form a covalent thioester adduct with TtuB via Cys-192 in vitro.

The enzyme catalyses [molybdopterin-synthase sulfur-carrier protein]-C-terminal Gly-Gly + ATP + H(+) = [molybdopterin-synthase sulfur-carrier protein]-C-terminal Gly-Gly-AMP + diphosphate. It catalyses the reaction [ThiS sulfur-carrier protein]-C-terminal Gly-Gly + ATP + H(+) = [ThiS sulfur-carrier protein]-C-terminal Gly-Gly-AMP + diphosphate. It carries out the reaction [TtuB sulfur-carrier protein]-C-terminal Gly-Gly + ATP + H(+) = [TtuB sulfur-carrier protein]-C-terminal Gly-Gly-AMP + diphosphate. It functions in the pathway tRNA modification. It participates in cofactor biosynthesis; thiamine diphosphate biosynthesis. Its pathway is cofactor biosynthesis; molybdopterin biosynthesis. Enzymatic activity may be regulated by TtuB conjugation. In terms of biological role, adenylyltransferase involved in the biosynthesis of several sulfur compounds. Is required for the 2-thiolation of 5-methyluridine residue at position 54 in the T loop of tRNAs, leading to 5-methyl-2-thiouridine (m(5)s(2)U or s(2)T). This modification allows thermal stabilization of tRNAs in thermophilic microorganisms, and is essential for cell growth at high temperatures. TtuC catalyzes the adenylation by ATP of the carboxyl group of the C-terminal glycine of sulfur carrier protein TtuB. Is also involved in the biosynthesis of thiamine, molybdenum cofactor (Moco) and probably tungsten cofactor (Wco), by adenylating the sulfur carriers ThiS and MoaD. Is required for the conjugation of TtuB to target proteins. This is Sulfur carrier protein adenylyltransferase from Thermus thermophilus (strain ATCC BAA-163 / DSM 7039 / HB27).